A 64-amino-acid chain; its full sequence is Thrombin-like enzyme collinein-4 (64 aa).

Intrachain disulfides connect cysteine 5/cysteine 23 and cysteine 34/cysteine 51.

Monomer. As to expression, expressed by the vanom gland.

The protein resides in the secreted. In terms of biological role, thrombin-like snake venom serine protease. The polypeptide is Thrombin-like enzyme collinein-4 (Crotalus durissus collilineatus (Brazilian rattlesnake)).